Reading from the N-terminus, the 212-residue chain is Cyclin-dependent kinase inhibitor 3 (212 aa).

The segment covering 1-12 has biased composition (polar residues); sequence MKPPSSIQTSEF. Residues 1-23 form a disordered region; that stretch reads MKPPSSIQTSEFDSSDEEPIEDE. An interaction with CDK2 region spans residues 1–34; that stretch reads MKPPSSIQTSEFDSSDEEPIEDEQTPIQISWLPL. Acidic residues predominate over residues 13–23; that stretch reads DSSDEEPIEDE. In terms of domain architecture, Tyrosine-protein phosphatase spans 32–201; it reads LPLSRVNYSQ…FRDKLAAHLS (170 aa). Cys-140 acts as the Phosphocysteine intermediate in catalysis.

It belongs to the protein-tyrosine phosphatase family. As to quaternary structure, interacts with cyclin-dependent kinases such as CDK1, CDK2 and CDK3. Does not interact with CDK4. Interacts (via C-terminus) with phosphorylated CDK2 (via C-terminal helix). Interacts with MS4A3 (via C-terminus); the interaction enhances CDKN3 enzymatic activity.

It is found in the cytoplasm. It localises to the perinuclear region. It carries out the reaction O-phospho-L-tyrosyl-[protein] + H2O = L-tyrosyl-[protein] + phosphate. It catalyses the reaction O-phospho-L-seryl-[protein] + H2O = L-seryl-[protein] + phosphate. The enzyme catalyses O-phospho-L-threonyl-[protein] + H2O = L-threonyl-[protein] + phosphate. In terms of biological role, may play a role in cell cycle regulation. Dual specificity phosphatase active toward substrates containing either phosphotyrosine or phosphoserine residues. Dephosphorylates CDK2 at 'Thr-160' in a cyclin-dependent manner. This Sus scrofa (Pig) protein is Cyclin-dependent kinase inhibitor 3.